Reading from the N-terminus, the 382-residue chain is Alanine racemase (382 aa).

K37 functions as the Proton acceptor; specific for D-alanine in the catalytic mechanism. Position 37 is an N6-(pyridoxal phosphate)lysine (K37). R135 provides a ligand contact to substrate. The active-site Proton acceptor; specific for L-alanine is the Y267. Residue M315 participates in substrate binding.

The protein belongs to the alanine racemase family. It depends on pyridoxal 5'-phosphate as a cofactor.

The catalysed reaction is L-alanine = D-alanine. The protein operates within amino-acid biosynthesis; D-alanine biosynthesis; D-alanine from L-alanine: step 1/1. Functionally, catalyzes the interconversion of L-alanine and D-alanine. May also act on other amino acids. This chain is Alanine racemase (alr), found in Geobacter sulfurreducens (strain ATCC 51573 / DSM 12127 / PCA).